The chain runs to 190 residues: Transcription factor bHLH162 (190 aa).

Polar residues predominate over residues 1 to 12 (MEPSHSNTGQSR). Residues 1-21 (MEPSHSNTGQSRSVDRKTVEK) are disordered. Residues 11 to 63 (SRSVDRKTVEKNRRMQMKSLYSELISLLPHHSSTEPLTLPDQLDEAANYIKKL) form the bHLH domain.

Belongs to the bHLH protein family.

The protein resides in the nucleus. In Arabidopsis thaliana (Mouse-ear cress), this protein is Transcription factor bHLH162.